A 72-amino-acid polypeptide reads, in one-letter code: Translation initiation factor IF-1 1 (72 aa).

The region spanning 1-72 (MSKDDVIQMA…TRARIIFRAK (72 aa)) is the S1-like domain.

The protein belongs to the IF-1 family. Component of the 30S ribosomal translation pre-initiation complex which assembles on the 30S ribosome in the order IF-2 and IF-3, IF-1 and N-formylmethionyl-tRNA(fMet); mRNA recruitment can occur at any time during PIC assembly.

The protein resides in the cytoplasm. In terms of biological role, one of the essential components for the initiation of protein synthesis. Stabilizes the binding of IF-2 and IF-3 on the 30S subunit to which N-formylmethionyl-tRNA(fMet) subsequently binds. Helps modulate mRNA selection, yielding the 30S pre-initiation complex (PIC). Upon addition of the 50S ribosomal subunit IF-1, IF-2 and IF-3 are released leaving the mature 70S translation initiation complex. In Polynucleobacter asymbioticus (strain DSM 18221 / CIP 109841 / QLW-P1DMWA-1) (Polynucleobacter necessarius subsp. asymbioticus), this protein is Translation initiation factor IF-1 1.